A 208-amino-acid polypeptide reads, in one-letter code: Translation initiation factor 2 subunit beta (208 aa).

Residues 144–202 (GIEEGKEYTVEISEVGSSGEGRASFRGFTIFVPGTKKGETVKVKIKKIKNDVAIAEVVS) enclose the TRAM domain.

It belongs to the eIF-2-beta/eIF-5 family. Heterotrimer composed of an alpha, a beta and a gamma chain.

In terms of biological role, eIF-2 functions in the early steps of protein synthesis by forming a ternary complex with GTP and initiator tRNA. The polypeptide is Translation initiation factor 2 subunit beta (eif2b) (Thermoplasma volcanium (strain ATCC 51530 / DSM 4299 / JCM 9571 / NBRC 15438 / GSS1)).